The sequence spans 284 residues: RNase adapter protein RapZ (284 aa).

8–15 provides a ligand contact to ATP; it reads GRSGSGKS. A GTP-binding site is contributed by 56 to 59; that stretch reads DVRN. The segment at 266 to 284 is RNA-binding; it reads RSRGKNVQSRHRTLEKRKP.

This sequence belongs to the RapZ-like family. RapZ subfamily. Homotrimer.

Its function is as follows. Modulates the synthesis of GlmS, by affecting the processing and stability of the regulatory small RNA GlmZ. When glucosamine-6-phosphate (GlcN6P) concentrations are high in the cell, RapZ binds GlmZ and targets it to cleavage by RNase E. Consequently, GlmZ is inactivated and unable to activate GlmS synthesis. Under low GlcN6P concentrations, RapZ is sequestered and inactivated by an other regulatory small RNA, GlmY, preventing GlmZ degradation and leading to synthesis of GlmS. The protein is RNase adapter protein RapZ of Shigella dysenteriae serotype 1 (strain Sd197).